Consider the following 236-residue polypeptide: (5-formylfuran-3-yl)methyl phosphate synthase (236 aa).

Lysine 27 acts as the Schiff-base intermediate with substrate in catalysis. The active-site Proton acceptor is the lysine 85.

Belongs to the MfnB family.

The enzyme catalyses 2 D-glyceraldehyde 3-phosphate = 4-(hydroxymethyl)-2-furancarboxaldehyde phosphate + phosphate + 2 H2O. It functions in the pathway cofactor biosynthesis; methanofuran biosynthesis. In terms of biological role, catalyzes the formation of 4-(hydroxymethyl)-2-furancarboxaldehyde phosphate (4-HFC-P) from two molecules of glyceraldehyde-3-P (GA-3-P). The chain is (5-formylfuran-3-yl)methyl phosphate synthase from Methanococcus maripaludis (strain C6 / ATCC BAA-1332).